A 372-amino-acid polypeptide reads, in one-letter code: Nucleosome assembly protein 1;1 (372 aa).

Residues 26 to 80 (VNALKNKLQNLAGQRSDVLENLTPNVRKRVDALRDIQSQHDELEAKFREERAILE) adopt a coiled-coil conformation. Position 41 is a phosphoserine (S41). The Nuclear export signal signature appears at 47–62 (LTPNVRKRVDALRDIQ). Positions 223-228 (KKKPKK) match the Nuclear localization signal motif. Positions 299–372 (AMEAEDFEID…DERPPECKQQ (74 aa)) are disordered. A compositionally biased stretch (acidic residues) spans 300–337 (MEAEDFEIDDDEEDDIDEDEDEEDEEDEEDDDDEDEEE). Residues 360-372 (GKQDERPPECKQQ) are compositionally biased toward basic and acidic residues. Position 369 is a cysteine methyl ester (C369). The S-farnesyl cysteine moiety is linked to residue C369. Residues 370-372 (KQQ) constitute a propeptide, removed in mature form.

It belongs to the nucleosome assembly protein (NAP) family. In terms of assembly, can form homomeric and heteromeric protein complexes with NAP1;2, NAP1;3 and NAP1;4. Binds histone H2A. Interacts with PP438/PNM1. Prenylation of the protein is required for its function during the cell proliferation phase of leaf development. Ubiquitous.

It localises to the nucleus. It is found in the cytoplasm. Functionally, may modulate chromatin structure by regulation of nucleosome assembly/disassembly. Contributes to the regulation of cell proliferation and cell expansion. May function in nucleotide excision repair (NER). Involved in somatic homologous recombination. This Arabidopsis thaliana (Mouse-ear cress) protein is Nucleosome assembly protein 1;1 (NAP1;1).